The sequence spans 98 residues: Large ribosomal subunit protein uL23 (98 aa).

Belongs to the universal ribosomal protein uL23 family. In terms of assembly, part of the 50S ribosomal subunit. Contacts protein L29, and trigger factor when it is bound to the ribosome.

One of the early assembly proteins it binds 23S rRNA. One of the proteins that surrounds the polypeptide exit tunnel on the outside of the ribosome. Forms the main docking site for trigger factor binding to the ribosome. The protein is Large ribosomal subunit protein uL23 of Nitrobacter winogradskyi (strain ATCC 25391 / DSM 10237 / CIP 104748 / NCIMB 11846 / Nb-255).